A 173-amino-acid chain; its full sequence is Shikimate kinase (173 aa).

11 to 16 (GAGKTT) serves as a coordination point for ATP. Threonine 15 contacts Mg(2+). Residues aspartate 33, arginine 57, and glycine 79 each coordinate substrate. ATP is bound at residue arginine 118. Residue arginine 140 coordinates substrate.

It belongs to the shikimate kinase family. Monomer. It depends on Mg(2+) as a cofactor.

Its subcellular location is the cytoplasm. The enzyme catalyses shikimate + ATP = 3-phosphoshikimate + ADP + H(+). Its pathway is metabolic intermediate biosynthesis; chorismate biosynthesis; chorismate from D-erythrose 4-phosphate and phosphoenolpyruvate: step 5/7. Its function is as follows. Catalyzes the specific phosphorylation of the 3-hydroxyl group of shikimic acid using ATP as a cosubstrate. The protein is Shikimate kinase of Parabacteroides distasonis (strain ATCC 8503 / DSM 20701 / CIP 104284 / JCM 5825 / NCTC 11152).